We begin with the raw amino-acid sequence, 1350 residues long: Zinc finger protein Xfin (1350 aa).

The KRAB domain occupies 1-58 (MEEPKCLQREMYKSVMTENYQCVLSLGYPIRKPEIVSMMEVGEELWSKNDSARPGQKE). Positions 47–68 (SKNDSARPGQKEVEGETPKESD) are disordered. C2H2-type zinc fingers lie at residues 108 to 130 (HICS…QRMH), 136 to 158 (HHCP…QRTH), 164 to 186 (YQCV…QRTH), 192 to 214 (YTCL…RRTH), 220 to 242 (YRCS…LRTH), 248 to 270 (YECP…KRTH), 276 to 298 (FRCS…MRKH), 326 to 348 (YSCS…QQTH), 354 to 376 (YLCS…FRTH), 382 to 404 (YQCA…LRTH), 410 to 432 (FKCS…QRTH), 438 to 460 (YKCS…QRIH), 466 to 488 (YKCT…QKVH), 503 to 525 (HKCS…SKLH), 531 to 553 (FQCA…IRVH), 559 to 581 (FKCL…WRIH), 587 to 609 (FPCY…HRTH), 615 to 637 (HKCS…SRTH), 643 to 665 (YPCT…QRIH), 671 to 693 (YHCT…RRTH), 699 to 721 (YRCP…LVVH), 750 to 772 (YPCT…LRTH), 778 to 800 (YPCN…LRTH), 806 to 828 (YHCP…QRTH), 834 to 856 (YTCS…MRTH), 862 to 884 (YKCE…QRIH), 890 to 912 (YHCP…QRIH), 918 to 940 (YPCG…LKCH), 988 to 1010 (FKCN…VRIH), 1016 to 1038 (YKCS…YRTH), 1044 to 1066 (YKCG…QRVH), 1136 to 1158 (YSCS…WRMH), 1164 to 1186 (YTCK…VRIH), 1192 to 1214 (YPCS…QRIH), 1220 to 1242 (YTCT…SRTH), 1248 to 1270 (YKCN…MRTH), and 1276 to 1298 (YGCN…QRMC).

The protein belongs to the krueppel C2H2-type zinc-finger protein family. Phosphorylated. Phosphorylation enhances RNA binding. Expressed in oocytes, and in specialized cell types such as neural retina cones in adults.

The protein resides in the cytoplasm. Functionally, binds to poly-G sequences in RNA. May function in post-translational regulation processes. In Xenopus laevis (African clawed frog), this protein is Zinc finger protein Xfin.